A 167-amino-acid chain; its full sequence is NADH-quinone oxidoreductase subunit B 2 (167 aa).

[4Fe-4S] cluster is bound by residues Cys-38, Cys-39, Cys-103, and Cys-132.

It belongs to the complex I 20 kDa subunit family. As to quaternary structure, NDH-1 is composed of 14 different subunits. Subunits NuoB, C, D, E, F, and G constitute the peripheral sector of the complex. [4Fe-4S] cluster serves as cofactor.

It localises to the cell inner membrane. It catalyses the reaction a quinone + NADH + 5 H(+)(in) = a quinol + NAD(+) + 4 H(+)(out). In terms of biological role, NDH-1 shuttles electrons from NADH, via FMN and iron-sulfur (Fe-S) centers, to quinones in the respiratory chain. The immediate electron acceptor for the enzyme in this species is believed to be ubiquinone. Couples the redox reaction to proton translocation (for every two electrons transferred, four hydrogen ions are translocated across the cytoplasmic membrane), and thus conserves the redox energy in a proton gradient. This chain is NADH-quinone oxidoreductase subunit B 2, found in Rhizobium etli (strain CIAT 652).